The chain runs to 195 residues: uncharacterized protein (195 aa).

A disordered region spans residues 143–195 (NKLIETINTNRTNNTDNKSTKSKKQTETKKSLRTNKIVKQPINKSKKNIREEY). A compositionally biased stretch (low complexity) spans 148 to 159 (TINTNRTNNTDN).

This is an uncharacterized protein from Acanthamoeba polyphaga (Amoeba).